The chain runs to 197 residues: Adenylate kinase 1 (197 aa).

Position 19–24 (G19–T24) interacts with ATP. The tract at residues S39 to V68 is NMP. Residues S40, R45, G95 to R98, and Q102 each bind AMP. An LID region spans residues K132–D142. Residue R133 coordinates ATP. The AMP site is built by R139 and R150. G178 serves as a coordination point for ATP.

The protein belongs to the adenylate kinase family. AK1 subfamily. Monomer. Requires Mg(2+) as cofactor.

The protein localises to the cytoplasm. The catalysed reaction is AMP + ATP = 2 ADP. Its pathway is purine metabolism; purine nucleotide biosynthesis. Catalyzes the reversible transfer of the terminal phosphate group between ATP and AMP. Plays an important role in cellular energy homeostasis and in adenine nucleotide metabolism. This is Adenylate kinase 1 from Schistosoma mansoni (Blood fluke).